The primary structure comprises 117 residues: ATP-dependent Clp protease adapter protein ClpS 1 (117 aa).

The protein belongs to the ClpS family. In terms of assembly, binds to the N-terminal domain of the chaperone ClpA.

In terms of biological role, involved in the modulation of the specificity of the ClpAP-mediated ATP-dependent protein degradation. This Agrobacterium fabrum (strain C58 / ATCC 33970) (Agrobacterium tumefaciens (strain C58)) protein is ATP-dependent Clp protease adapter protein ClpS 1.